The following is a 289-amino-acid chain: Cysteine-rich venom protein Mr30 (289 aa).

The first 24 residues, 1-24 (MLSTMQTVGAILMLSIVFVAGTKR), serve as a signal peptide directing secretion. E33 carries the post-translational modification 4-carboxyglutamate. The SCP domain maps to 62–184 (VRMHNVIRAT…GEDRYFVCNY (123 aa)).

This sequence belongs to the CRISP family. Contains 11 disulfide bonds. As to expression, expressed by the venom duct.

The protein resides in the secreted. Functionally, has no proteolytic activity. In Conus marmoreus (Marble cone), this protein is Cysteine-rich venom protein Mr30.